The chain runs to 345 residues: Biotin synthase (345 aa).

The Radical SAM core domain maps to 39-266 (NEVQVSTLLS…ASHVRLSAGR (228 aa)). Cys54, Cys58, and Cys61 together coordinate [4Fe-4S] cluster. [2Fe-2S] cluster-binding residues include Cys98, Cys129, Cys189, and Arg261.

This sequence belongs to the radical SAM superfamily. Biotin synthase family. As to quaternary structure, homodimer. [4Fe-4S] cluster is required as a cofactor. The cofactor is [2Fe-2S] cluster.

It carries out the reaction (4R,5S)-dethiobiotin + (sulfur carrier)-SH + 2 reduced [2Fe-2S]-[ferredoxin] + 2 S-adenosyl-L-methionine = (sulfur carrier)-H + biotin + 2 5'-deoxyadenosine + 2 L-methionine + 2 oxidized [2Fe-2S]-[ferredoxin]. The protein operates within cofactor biosynthesis; biotin biosynthesis; biotin from 7,8-diaminononanoate: step 2/2. Catalyzes the conversion of dethiobiotin (DTB) to biotin by the insertion of a sulfur atom into dethiobiotin via a radical-based mechanism. The chain is Biotin synthase from Idiomarina loihiensis (strain ATCC BAA-735 / DSM 15497 / L2-TR).